The following is a 912-amino-acid chain: Collagen alpha-2(I) chain (912 aa).

The span at 1–41 (GPMGIMGPRGPPGASGAPGPQGFQGPAGEPGEPGQTGPAGA) shows a compositional bias: low complexity. Disordered regions lie at residues 1–206 (GPMG…GITG), 222–739 (IPGP…GIIG), and 763–912 (GPPG…RGSQ). The span at 43–57 (AGEDGHPGKPGRPGE) shows a compositional bias: basic and acidic residues. 6 stretches are compositionally biased toward low complexity: residues 124–153 (VGAP…SAGP), 178–192 (AGPR…ISGP), 229–244 (PGPA…RGIV), 295–327 (PGIR…VRGP), 360–382 (PVGI…RGEP), and 406–424 (AGIA…NGAQ). Over residues 431–440 (GVQGGKGEQG) the composition is skewed to gly residues. Low complexity-rich tracts occupy residues 474–501 (IPGP…SRGP) and 517–532 (IGAP…SGIP). Positions 539-548 (GIPGGKGEIG) are enriched in gly residues. Low complexity-rich tracts occupy residues 549 to 612 (NPGR…QPGA) and 622 to 637 (NGPV…AGPS). Residues 647-656 (GSRGDGGPPG) show a composition bias toward gly residues. Low complexity-rich tracts occupy residues 658-667 (TGFPGAAGRT), 728-739 (PQGIIGAPGIIG), 763-785 (GPPG…APGE), 805-815 (NAGPVGAVGAP), and 830-850 (PGPV…PSGP).

The protein belongs to the fibrillar collagen family. Trimers of one alpha 2(I) and two alpha 1(I) chains. Interacts (via C-terminus) with TMEM131 (via PapD-L domain); the interaction is direct and is involved in assembly and TRAPPIII ER-to-Golgi transport complex-dependent secretion of collagen. Post-translationally, prolines at the third position of the tripeptide repeating unit (G-X-Y) are hydroxylated in some or all of the chains. As to expression, forms the fibrils of tendon, ligaments and bones. In bones, the fibrils are mineralized with calcium hydroxyapatite.

It localises to the secreted. The protein localises to the extracellular space. It is found in the extracellular matrix. Type I collagen is a member of group I collagen (fibrillar forming collagen). This is Collagen alpha-2(I) chain from Equus sp.